We begin with the raw amino-acid sequence, 79 residues long: Moronecidin (79 aa).

A signal peptide spans 1–22 (MKCATLSLVLSMVVLMAEPGDA). Glycine 44 carries the glycine amide modification. The interval 45 to 68 (GKAEQDQQDQQYQQDQQDQQAQQY) is disordered. Residues 47-79 (AEQDQQDQQYQQDQQDQQAQQYQRFNRERAAFD) constitute a propeptide that is removed on maturation. The segment covering 52 to 68 (QDQQYQQDQQDQQAQQY) has biased composition (low complexity).

In terms of tissue distribution, expressed in gill, skin, intestine, spleen, anterior kidney, and blood cells.

The protein localises to the secreted. Its function is as follows. Antimicrobial peptide with broad-spectrum activity against Gram-positive and Gram-negative bacteria as well as against a variety of fungi. Rapidly inactivates both channel catfish herpesvirus (ED(50)=4 uM) and frog virus 3 (ED(50)=13 uM) over a wide temperature range. Seems to disrupt the membranes by adopting an alpha helical conformation. In Morone chrysops (White bass), this protein is Moronecidin.